Consider the following 230-residue polypeptide: Octanoyltransferase (230 aa).

A BPL/LPL catalytic domain is found at 40–218 (PSLDDVLILL…CFAEVFGVEL (179 aa)). Residues 82–89 (RGGEVTYH), 149–151 (AIG), and 162–164 (GFA) contribute to the substrate site. Cysteine 180 functions as the Acyl-thioester intermediate in the catalytic mechanism.

Belongs to the LipB family.

The protein resides in the cytoplasm. The catalysed reaction is octanoyl-[ACP] + L-lysyl-[protein] = N(6)-octanoyl-L-lysyl-[protein] + holo-[ACP] + H(+). Its pathway is protein modification; protein lipoylation via endogenous pathway; protein N(6)-(lipoyl)lysine from octanoyl-[acyl-carrier-protein]: step 1/2. Catalyzes the transfer of endogenously produced octanoic acid from octanoyl-acyl-carrier-protein onto the lipoyl domains of lipoate-dependent enzymes. Lipoyl-ACP can also act as a substrate although octanoyl-ACP is likely to be the physiological substrate. This is Octanoyltransferase from Nostoc punctiforme (strain ATCC 29133 / PCC 73102).